We begin with the raw amino-acid sequence, 49 residues long: Large ribosomal subunit protein bL33 (49 aa).

Belongs to the bacterial ribosomal protein bL33 family.

This Thermosipho melanesiensis (strain DSM 12029 / CIP 104789 / BI429) protein is Large ribosomal subunit protein bL33.